The primary structure comprises 440 residues: GTPase Der (440 aa).

2 EngA-type G domains span residues 4–168 (PIVA…NPED) and 177–352 (IKVA…NQNA). Residues 10-17 (GRPNVGKS), 57-61 (DTGGI), 120-123 (NKVD), 183-190 (GKPNVGKS), 230-234 (DTAGI), and 295-298 (NKWD) each bind GTP. One can recognise a KH-like domain in the interval 353-437 (MRIPTGALNE…PIRFILREKT (85 aa)).

The protein belongs to the TRAFAC class TrmE-Era-EngA-EngB-Septin-like GTPase superfamily. EngA (Der) GTPase family. As to quaternary structure, associates with the 50S ribosomal subunit.

Its function is as follows. GTPase that plays an essential role in the late steps of ribosome biogenesis. This is GTPase Der from Alkaliphilus oremlandii (strain OhILAs) (Clostridium oremlandii (strain OhILAs)).